The primary structure comprises 122 residues: Seminal vesicle secretory protein 5 (122 aa).

Residues Met1 to Gly21 form the signal peptide. The tract at residues Arg23 to Lys122 is disordered. Over residues Ser27 to His37 the composition is skewed to polar residues.

This sequence belongs to the SVP2/SVP5/SVP6 family. As to expression, testis.

It localises to the secreted. It is found in the extracellular space. The chain is Seminal vesicle secretory protein 5 (Svs5) from Mus musculus (Mouse).